Reading from the N-terminus, the 121-residue chain is Probable tail terminator protein (121 aa).

This sequence belongs to the Skunalikevirus tail terminator protein family. As to quaternary structure, homohexamer. Interacts with the tail tube protein.

It localises to the virion. In terms of biological role, plays an essential role in tail assembly by capping the rapidly polymerizing tail once it has reached its requisite length and serving as the interaction surface for the connector and the tail tube proteins. This is Probable tail terminator protein from Lactococcus phage SK1 (Lactococcus lactis bacteriophage SK1).